The primary structure comprises 488 residues: Glutamyl-tRNA(Gln) amidotransferase subunit A (488 aa).

Residues lysine 77 and serine 152 each act as charge relay system in the active site. Serine 176 functions as the Acyl-ester intermediate in the catalytic mechanism.

Belongs to the amidase family. GatA subfamily. In terms of assembly, heterotrimer of A, B and C subunits.

The catalysed reaction is L-glutamyl-tRNA(Gln) + L-glutamine + ATP + H2O = L-glutaminyl-tRNA(Gln) + L-glutamate + ADP + phosphate + H(+). Its function is as follows. Allows the formation of correctly charged Gln-tRNA(Gln) through the transamidation of misacylated Glu-tRNA(Gln) in organisms which lack glutaminyl-tRNA synthetase. The reaction takes place in the presence of glutamine and ATP through an activated gamma-phospho-Glu-tRNA(Gln). This chain is Glutamyl-tRNA(Gln) amidotransferase subunit A, found in Streptococcus pneumoniae serotype 19F (strain G54).